Here is a 491-residue protein sequence, read N- to C-terminus: MANYFNTLTFIEKLKHLGKCRFMSNNEFSNGIQALLSKKVAIIGCGSQGLNQGLNMRDSGVNITYALRRESILNKQESWARATRNGFPVGTYDEIIPKSDVVINLTPDKCHTSVIRQIEPLMKHGSTLGYSHGFHIVEVGEKIRQDITVIMVAPKCPGTEVRQEYQRGFGVPALIAVHEENDTYDMGMTLAKSWAFALGSHRAGVLESSFVAEVKSDLMGEQTILCGMLQAGSILCFDYMISNGVNAAYAGKFIQCGWEVITEALKQGGITLMMDRLSNASKIRAFILSEKLKNILKPVFEKHMENILNGVFSKEMMLDWENNDSKLLKWREKTSQLPLEQAPNYQQEILEQTYFDYGILMVAIIKSGIELSFDTMIKSGIAPESAYYESLHELPLIANTIARKKLYEMNMVISDTAEYGNYLFCDKVVPLLKKTIIPNLRTGDLGMSPKNVNVDNIVLRNTNDMIRNHTIEKVGIQLRSYMQNMKSLSFN.

The 195-residue stretch at 14–208 folds into the KARI N-terminal Rossmann domain; the sequence is LKHLGKCRFM…GSHRAGVLES (195 aa). Residues 45–48, R68, and S78 each bind NADP(+); that span reads CGSQ. H132 is an active-site residue. Position 158 (G158) interacts with NADP(+). KARI C-terminal knotted domains are found at residues 209-344 and 345-485; these read SFVA…QAPN and YQQE…MQNM. Positions 217, 221, 389, and 393 each coordinate Mg(2+). Residue S414 coordinates substrate.

This sequence belongs to the ketol-acid reductoisomerase family. Requires Mg(2+) as cofactor.

The enzyme catalyses (2R)-2,3-dihydroxy-3-methylbutanoate + NADP(+) = (2S)-2-acetolactate + NADPH + H(+). The catalysed reaction is (2R,3R)-2,3-dihydroxy-3-methylpentanoate + NADP(+) = (S)-2-ethyl-2-hydroxy-3-oxobutanoate + NADPH + H(+). It participates in amino-acid biosynthesis; L-isoleucine biosynthesis; L-isoleucine from 2-oxobutanoate: step 2/4. The protein operates within amino-acid biosynthesis; L-valine biosynthesis; L-valine from pyruvate: step 2/4. Involved in the biosynthesis of branched-chain amino acids (BCAA). Catalyzes an alkyl-migration followed by a ketol-acid reduction of (S)-2-acetolactate (S2AL) to yield (R)-2,3-dihydroxy-isovalerate. In the isomerase reaction, S2AL is rearranged via a Mg-dependent methyl migration to produce 3-hydroxy-3-methyl-2-ketobutyrate (HMKB). In the reductase reaction, this 2-ketoacid undergoes a metal-dependent reduction by NADPH to yield (R)-2,3-dihydroxy-isovalerate. The polypeptide is Ketol-acid reductoisomerase (NADP(+)) (Blochmanniella pennsylvanica (strain BPEN)).